Reading from the N-terminus, the 262-residue chain is Phosphatidylserine decarboxylase proenzyme (262 aa).

Residues aspartate 86, histidine 142, and serine 226 each act as charge relay system; for autoendoproteolytic cleavage activity in the active site. Serine 226 acts as the Schiff-base intermediate with substrate; via pyruvic acid; for decarboxylase activity in catalysis. Serine 226 is modified (pyruvic acid (Ser); by autocatalysis).

It belongs to the phosphatidylserine decarboxylase family. PSD-B subfamily. Prokaryotic type I sub-subfamily. In terms of assembly, heterodimer of a large membrane-associated beta subunit and a small pyruvoyl-containing alpha subunit. Requires pyruvate as cofactor. Is synthesized initially as an inactive proenzyme. Formation of the active enzyme involves a self-maturation process in which the active site pyruvoyl group is generated from an internal serine residue via an autocatalytic post-translational modification. Two non-identical subunits are generated from the proenzyme in this reaction, and the pyruvate is formed at the N-terminus of the alpha chain, which is derived from the carboxyl end of the proenzyme. The autoendoproteolytic cleavage occurs by a canonical serine protease mechanism, in which the side chain hydroxyl group of the serine supplies its oxygen atom to form the C-terminus of the beta chain, while the remainder of the serine residue undergoes an oxidative deamination to produce ammonia and the pyruvoyl prosthetic group on the alpha chain. During this reaction, the Ser that is part of the protease active site of the proenzyme becomes the pyruvoyl prosthetic group, which constitutes an essential element of the active site of the mature decarboxylase.

The protein localises to the cell membrane. It carries out the reaction a 1,2-diacyl-sn-glycero-3-phospho-L-serine + H(+) = a 1,2-diacyl-sn-glycero-3-phosphoethanolamine + CO2. It functions in the pathway phospholipid metabolism; phosphatidylethanolamine biosynthesis; phosphatidylethanolamine from CDP-diacylglycerol: step 2/2. Its function is as follows. Catalyzes the formation of phosphatidylethanolamine (PtdEtn) from phosphatidylserine (PtdSer). The protein is Phosphatidylserine decarboxylase proenzyme of Bacillus cereus (strain B4264).